Reading from the N-terminus, the 205-residue chain is GTP cyclohydrolase-2 (205 aa).

Arg49–Glu53 is a binding site for GTP. The Zn(2+) site is built by Cys54, Cys65, and Cys67. GTP contacts are provided by residues Gln70, Glu92–Arg94, and Thr114. Asp126 acts as the Proton acceptor in catalysis. Arg128 serves as the catalytic Nucleophile. Thr149 and Lys154 together coordinate GTP.

The protein belongs to the GTP cyclohydrolase II family. Zn(2+) serves as cofactor.

The enzyme catalyses GTP + 4 H2O = 2,5-diamino-6-hydroxy-4-(5-phosphoribosylamino)-pyrimidine + formate + 2 phosphate + 3 H(+). The protein operates within cofactor biosynthesis; riboflavin biosynthesis; 5-amino-6-(D-ribitylamino)uracil from GTP: step 1/4. In terms of biological role, catalyzes the conversion of GTP to 2,5-diamino-6-ribosylamino-4(3H)-pyrimidinone 5'-phosphate (DARP), formate and pyrophosphate. The polypeptide is GTP cyclohydrolase-2 (Pseudomonas syringae pv. tomato (strain ATCC BAA-871 / DC3000)).